A 273-amino-acid polypeptide reads, in one-letter code: Manganese catalase (273 aa).

Glu-35 contacts Mn(2+). 2 residues coordinate Ca(2+): Asp-57 and Asp-61. The Mn(2+) site is built by Glu-66, His-69, Glu-149, and His-182. Positions 220, 222, and 224 each coordinate Ca(2+). Positions 254-273 are disordered; it reads EKPELKPAPPCVHNTLPGRE.

The protein belongs to the manganese catalase family. As to quaternary structure, homohexamer. Ca(2+) serves as cofactor. Mn(2+) is required as a cofactor.

The enzyme catalyses 2 H2O2 = O2 + 2 H2O. Its activity is regulated as follows. Inhibited in the presence of EDTA. Resistant to inhibition by sodium azide. Its function is as follows. Catalyzes the decomposition of hydrogen peroxide into water and oxygen. No significant activity could be detected with any of the other tested substrates, including glutathione, pyrogallol, NADH, NADPH and o-dianisidine. This Bacillus subtilis protein is Manganese catalase.